Consider the following 503-residue polypeptide: V-type proton ATPase subunit B (503 aa).

An ATP-binding site is contributed by arginine 378. Phosphoserine occurs at positions 491, 492, 502, and 503.

This sequence belongs to the ATPase alpha/beta chains family. As to quaternary structure, V-ATPase is a heteromultimeric enzyme composed of a peripheral catalytic V1 complex (components A to H) attached to an integral membrane V0 proton pore complex (components: a, c, c', c'', d, e, f and VOA1). Interacts with rav1.

The protein localises to the vacuole membrane. Functionally, non-catalytic subunit of the V1 complex of vacuolar(H+)-ATPase (V-ATPase), a multisubunit enzyme composed of a peripheral complex (V1) that hydrolyzes ATP and a membrane integral complex (V0) that translocates protons. V-ATPase is responsible for acidifying and maintaining the pH of intracellular compartments. The polypeptide is V-type proton ATPase subunit B (Schizosaccharomyces pombe (strain 972 / ATCC 24843) (Fission yeast)).